We begin with the raw amino-acid sequence, 929 residues long: Isoleucine--tRNA ligase (929 aa).

The short motif at 58 to 68 (PYANGDIHIGH) is the 'HIGH' region element. L-isoleucyl-5'-AMP is bound at residue Glu568. The 'KMSKS' region motif lies at 609–613 (KMSKS). Lys612 is a binding site for ATP. Residues Cys892, Cys895, Cys912, and Cys915 each contribute to the Zn(2+) site.

It belongs to the class-I aminoacyl-tRNA synthetase family. IleS type 1 subfamily. In terms of assembly, monomer. It depends on Zn(2+) as a cofactor.

It localises to the cytoplasm. The catalysed reaction is tRNA(Ile) + L-isoleucine + ATP = L-isoleucyl-tRNA(Ile) + AMP + diphosphate. Functionally, catalyzes the attachment of isoleucine to tRNA(Ile). As IleRS can inadvertently accommodate and process structurally similar amino acids such as valine, to avoid such errors it has two additional distinct tRNA(Ile)-dependent editing activities. One activity is designated as 'pretransfer' editing and involves the hydrolysis of activated Val-AMP. The other activity is designated 'posttransfer' editing and involves deacylation of mischarged Val-tRNA(Ile). The sequence is that of Isoleucine--tRNA ligase from Thiobacillus denitrificans (strain ATCC 25259 / T1).